A 340-amino-acid chain; its full sequence is Glycerol-3-phosphate dehydrogenase [NAD(P)+] (340 aa).

Serine 13, tryptophan 14, and lysine 108 together coordinate NADPH. Residues lysine 108, glycine 139, and serine 141 each coordinate sn-glycerol 3-phosphate. Residue alanine 143 participates in NADPH binding. Sn-glycerol 3-phosphate contacts are provided by lysine 194, aspartate 247, serine 257, arginine 258, and asparagine 259. Lysine 194 (proton acceptor) is an active-site residue. Arginine 258 contributes to the NADPH binding site. Residues valine 282 and glutamate 284 each contribute to the NADPH site.

The protein belongs to the NAD-dependent glycerol-3-phosphate dehydrogenase family.

Its subcellular location is the cytoplasm. The enzyme catalyses sn-glycerol 3-phosphate + NAD(+) = dihydroxyacetone phosphate + NADH + H(+). The catalysed reaction is sn-glycerol 3-phosphate + NADP(+) = dihydroxyacetone phosphate + NADPH + H(+). The protein operates within membrane lipid metabolism; glycerophospholipid metabolism. In terms of biological role, catalyzes the reduction of the glycolytic intermediate dihydroxyacetone phosphate (DHAP) to sn-glycerol 3-phosphate (G3P), the key precursor for phospholipid synthesis. This is Glycerol-3-phosphate dehydrogenase [NAD(P)+] from Streptococcus thermophilus (strain ATCC BAA-491 / LMD-9).